The chain runs to 217 residues: Putative thymidylate synthase (217 aa).

Residue cysteine 139 is part of the active site.

This sequence belongs to the thymidylate synthase family. Archaeal-type ThyA subfamily. Monomer.

It localises to the cytoplasm. Its pathway is pyrimidine metabolism; dTTP biosynthesis. May catalyze the biosynthesis of dTMP using an unknown cosubstrate. This Methanococcoides burtonii (strain DSM 6242 / NBRC 107633 / OCM 468 / ACE-M) protein is Putative thymidylate synthase.